We begin with the raw amino-acid sequence, 259 residues long: Thiazole synthase (259 aa).

Residue Lys-99 is the Schiff-base intermediate with DXP of the active site. 1-deoxy-D-xylulose 5-phosphate-binding positions include Gly-160, 186–187, and 208–209; these read AG and NT.

Belongs to the ThiG family. In terms of assembly, homotetramer. Forms heterodimers with either ThiH or ThiS.

It localises to the cytoplasm. It carries out the reaction [ThiS sulfur-carrier protein]-C-terminal-Gly-aminoethanethioate + 2-iminoacetate + 1-deoxy-D-xylulose 5-phosphate = [ThiS sulfur-carrier protein]-C-terminal Gly-Gly + 2-[(2R,5Z)-2-carboxy-4-methylthiazol-5(2H)-ylidene]ethyl phosphate + 2 H2O + H(+). It functions in the pathway cofactor biosynthesis; thiamine diphosphate biosynthesis. Functionally, catalyzes the rearrangement of 1-deoxy-D-xylulose 5-phosphate (DXP) to produce the thiazole phosphate moiety of thiamine. Sulfur is provided by the thiocarboxylate moiety of the carrier protein ThiS. In vitro, sulfur can be provided by H(2)S. This chain is Thiazole synthase, found in Porphyromonas gingivalis (strain ATCC BAA-308 / W83).